We begin with the raw amino-acid sequence, 339 residues long: UPF0450 protein C17orf58 (339 aa).

An N-terminal signal peptide occupies residues 1–17 (MTARAFWLLCLIVGSSP). The segment at 17–191 (PEAPVAERKT…PQRDAEPGAE (175 aa)) is disordered. The span at 21–36 (VAERKTSPPHSRKPDS) shows a compositional bias: basic and acidic residues. Positions 56–72 (APQRPRAAEVAPAARAW) are enriched in low complexity. Residues 112–125 (ASPRREPASEDAPR) show a composition bias toward basic and acidic residues. Residues 132-163 (LRFPAARPPALATEGSAGHAHPNRPRAAALAP) are compositionally biased toward low complexity. Cystine bridges form between C193-C267, C197-C271, and C208-C338. The 146-residue stretch at 193 to 338 (CARACRSDLD…QIQGAIHTQC (146 aa)) folds into the NTR domain.

Belongs to the UPF0450 family.

The polypeptide is UPF0450 protein C17orf58 (C17orf58) (Homo sapiens (Human)).